Here is a 917-residue protein sequence, read N- to C-terminus: Transcription factor E2F8 (917 aa).

The tract at residues 1–122 (MSSTLSEGQT…TEQGEEVEKL (122 aa)) is disordered. Polar residues-rich tracts occupy residues 16–27 (LSPSKATSTNNK) and 37–48 (PLKNSNKASTSE). Basic and acidic residues predominate over residues 93 to 103 (IRNREKERAVD). The segment covering 105–117 (SESENSQETEQGE) has biased composition (acidic residues). Residues 126–195 (RKDKSLGLLC…LAKNRYTWHG (70 aa)) mediate DNA binding. Disordered regions lie at residues 221-252 (QIRQ…FEVD), 353-386 (PAFK…SRSS), 461-497 (EQSA…GMQI), 556-615 (VGAN…SVSP), 671-698 (LEKE…QPQK), and 813-834 (GSVT…PHPG). The span at 233–252 (EFDLDGEEKENEEMSSFEVD) shows a compositional bias: acidic residues. Residues 273–359 (RKDKSLRVMS…GRKPAFKWTG (87 aa)) mediate DNA binding. A compositionally biased stretch (polar residues) spans 371-386 (ISTTSSAPKPLESRSS). 2 stretches are compositionally biased toward low complexity: residues 475 to 488 (SSQS…TSAS) and 568 to 578 (TSNNQTNQSSS). Residues 595 to 605 (EKSSVGSPSKM) are compositionally biased toward polar residues. The span at 815–830 (VTPNPHTPEQSSSLQS) shows a compositional bias: polar residues.

This sequence belongs to the E2F/DP family. As to quaternary structure, homodimer and heterodimer: mainly forms homodimers and, to a lesser extent, heterodimers with e2f7.

It localises to the nucleus. Its function is as follows. Atypical E2F transcription factor that participates in various processes such as angiogenesis and polyploidization of specialized cells. Mainly acts as a transcription repressor that binds DNA independently of DP proteins and specifically recognizes the E2 recognition site 5'-TTTC[CG]CGC-3'. Directly represses transcription of classical E2F transcription factors such as e2f1. Acts as a regulator of S-phase by recognizing and binding the E2-related site 5'-TTCCCGCC-3' and mediating repression of G1/S-regulated genes. Acts as a promoter of sprouting angiogenesis, possibly by acting as a transcription activator and promoting expression of vegfa. This chain is Transcription factor E2F8 (e2f8), found in Danio rerio (Zebrafish).